The chain runs to 242 residues: uncharacterized protein (242 aa).

One can recognise a Response regulatory domain in the interval 3–116; the sequence is TALVIDDEQF…RLNKTVKRLN (114 aa). At aspartate 54 the chain carries 4-aspartylphosphate. The HTH LytTR-type domain maps to 139-240; that stretch reads IPCIGHNRIV…LKVLKEMLGI (102 aa).

This is an uncharacterized protein from Vibrio parahaemolyticus serotype O3:K6 (strain RIMD 2210633).